The chain runs to 207 residues: Putative 3-methyladenine DNA glycosylase (207 aa).

The protein belongs to the DNA glycosylase MPG family.

In Koribacter versatilis (strain Ellin345), this protein is Putative 3-methyladenine DNA glycosylase.